We begin with the raw amino-acid sequence, 86 residues long: Small ribosomal subunit protein bS16 (86 aa).

This sequence belongs to the bacterial ribosomal protein bS16 family.

This Borreliella afzelii (strain PKo) (Borrelia afzelii) protein is Small ribosomal subunit protein bS16.